Here is a 256-residue protein sequence, read N- to C-terminus: 1-(5-phosphoribosyl)-5-[(5-phosphoribosylamino)methylideneamino] imidazole-4-carboxamide isomerase (256 aa).

The active-site Proton acceptor is Asp8. Residue Asp129 is the Proton donor of the active site.

The protein belongs to the HisA/HisF family.

The protein resides in the cytoplasm. It carries out the reaction 1-(5-phospho-beta-D-ribosyl)-5-[(5-phospho-beta-D-ribosylamino)methylideneamino]imidazole-4-carboxamide = 5-[(5-phospho-1-deoxy-D-ribulos-1-ylimino)methylamino]-1-(5-phospho-beta-D-ribosyl)imidazole-4-carboxamide. The protein operates within amino-acid biosynthesis; L-histidine biosynthesis; L-histidine from 5-phospho-alpha-D-ribose 1-diphosphate: step 4/9. This chain is 1-(5-phosphoribosyl)-5-[(5-phosphoribosylamino)methylideneamino] imidazole-4-carboxamide isomerase, found in Synechococcus sp. (strain WH7803).